A 90-amino-acid polypeptide reads, in one-letter code: Serine protease inhibitor Cvsi-1 (90 aa).

Residues 1–19 (MDVVRTLILCVCLFGLTFA) form the signal peptide.

In terms of processing, contains 6 disulfide bonds. As to expression, detected in hemolymph (at protein level). In oysters collected in the summer the expression level is highest in the digestive gland with low levels of expression in gill, mantle, labial palp, style-sac midgut, gonad, heart, and hemocyte. In winter expression levels are higher in all tissues with highest expression levels observed in the digestive gland. Within the digestive gland expression is limited to the basophil cells of the digestive diverticula.

It localises to the secreted. Functionally, slow-binding inhibitor of serine proteases. The inhibitor rapidly binds to the protease forming a weak enzyme-inhibitor complex, and this is followed by a slow isomerization forming a tight-binding enzyme-inhibitor complex. Active against subtilisin A, perkinsin and trypsin with dissociation constants of 0.29 nM, 13.7 nM and 17.7 nM respectively. Not active against thermolysin, papain or pepsin. Has antiparasitic activity against the protozoan P.marinus. This chain is Serine protease inhibitor Cvsi-1, found in Crassostrea virginica (Eastern oyster).